The chain runs to 104 residues: uncharacterized protein (104 aa).

This is an uncharacterized protein from Bacillus subtilis (strain 168).